Reading from the N-terminus, the 215-residue chain is Cytidylate kinase (215 aa).

An ATP-binding site is contributed by 10 to 18 (GPAAAGKST).

It belongs to the cytidylate kinase family. Type 1 subfamily.

It is found in the cytoplasm. The enzyme catalyses CMP + ATP = CDP + ADP. It catalyses the reaction dCMP + ATP = dCDP + ADP. This is Cytidylate kinase from Staphylococcus epidermidis (strain ATCC 35984 / DSM 28319 / BCRC 17069 / CCUG 31568 / BM 3577 / RP62A).